The chain runs to 314 residues: tRNA dimethylallyltransferase (314 aa).

12–19 is an ATP binding site; the sequence is GPTASGKT. Residue 14-19 participates in substrate binding; it reads TASGKT. 2 interaction with substrate tRNA regions span residues 37-40 and 162-166; these read DSAL and QRIIR.

This sequence belongs to the IPP transferase family. Monomer. The cofactor is Mg(2+).

It catalyses the reaction adenosine(37) in tRNA + dimethylallyl diphosphate = N(6)-dimethylallyladenosine(37) in tRNA + diphosphate. Functionally, catalyzes the transfer of a dimethylallyl group onto the adenine at position 37 in tRNAs that read codons beginning with uridine, leading to the formation of N6-(dimethylallyl)adenosine (i(6)A). The sequence is that of tRNA dimethylallyltransferase from Acinetobacter baumannii (strain AB0057).